The primary structure comprises 180 residues: ADP-ribosylation factor 1 (180 aa).

Gly-2 carries the N-myristoyl glycine lipid modification. GTP is bound by residues 24–31 (GLDAAGKT), 67–71 (DVGGQ), and 126–129 (NKQD).

This sequence belongs to the small GTPase superfamily. Arf family.

It localises to the golgi apparatus. It catalyses the reaction GTP + H2O = GDP + phosphate + H(+). Functionally, GTP-binding protein involved in protein trafficking; may modulate vesicle budding and uncoating within the Golgi apparatus. The chain is ADP-ribosylation factor 1 (arf1) from Schizosaccharomyces pombe (strain 972 / ATCC 24843) (Fission yeast).